The following is a 262-amino-acid chain: 7alpha-hydroxysteroid dehydrogenase (262 aa).

NADP(+) contacts are provided by residues 13 to 18, arginine 38, 63 to 64, and asparagine 90; these read SSTRGI and NA. Positions 145 and 158 each coordinate taurochenodeoxycholate. NADP(+) contacts are provided by residues tyrosine 158, lysine 162, and 191 to 195; that span reads IGTRA. Residue tyrosine 158 is the Proton acceptor of the active site.

This sequence belongs to the short-chain dehydrogenases/reductases (SDR) family. Homotetramer. A dynamic equilibrium between dimers and tetramers seems to exist.

The enzyme catalyses cholate + NADP(+) = 3alpha,12alpha-dihydroxy-7-oxo-5beta-cholanate + NADPH + H(+). It carries out the reaction chenodeoxycholate + NADP(+) = 7-oxolithocholate + NADPH + H(+). The catalysed reaction is 3alpha,7alpha-dihydroxy-12-oxo-5beta-cholanate + NADP(+) = 7,12-dioxo-lithocholate + NADPH + H(+). It catalyses the reaction 7alpha-hydroxy-3,12-dioxo-5beta-cholanate + NADP(+) = dehydrocholate + NADPH + H(+). The enzyme catalyses glycochenodeoxycholate + NADP(+) = 7-oxoglycolithocholate + NADPH + H(+). It carries out the reaction taurochenodeoxycholate + NADP(+) = 7-oxotaurolithocholate + NADPH + H(+). Its activity is regulated as follows. Activated by metal ions such as Mg(2+), Na(+) and K(+). 7alpha-hydroxysteroid dehydrogenase that catalyzes the NADP(+)-dependent oxidation of the 7alpha-hydroxy group of 7alpha-hydroxysteroids, such as cholate, chenodeoxycholate, glycochenodeoxycholate and taurochenodeoxycholate, to the corresponding 7-oxosteroids. Is also able to catalyze the reverse reduction reactions. Together with 7beta-HSDH encoded in the adjacent gene, is likely involved in the epimerization of the hydroxy group at C-7 of primary bile acids through 7-keto bile acid intermediates. The polypeptide is 7alpha-hydroxysteroid dehydrogenase (Clostridium sardiniense (Clostridium absonum)).